Consider the following 289-residue polypeptide: Extracellular ribonuclease (289 aa).

Positions 1 to 24 (MTKKLWFLPIVCLFFILGWTAPSA) are cleaved as a signal peptide. Residues 25–51 (SAGAPADTNLYSRLAVSTAGGTTLFPQ) constitute a propeptide that is removed on maturation. Positions 177-197 (FDNGGSEYPKAPGNYYDGDSW) are disordered.

It localises to the secreted. Mg(2+)-activated ribonuclease which hydrolyzes RNA apparently nonspecifically into oligonucleotides with 5'-terminal phosphate. The chain is Extracellular ribonuclease (bsn) from Bacillus amyloliquefaciens (Bacillus velezensis).